The following is a 487-amino-acid chain: Multiple inositol polyphosphate phosphatase 1 (487 aa).

A signal peptide spans 1 to 30; the sequence is MLRAPGCLLRTSVAPAAALAAALLSSLARC. His89 is a catalytic residue. Asn242 and Asn481 each carry an N-linked (GlcNAc...) asparagine glycan. The Prevents secretion from ER signature appears at 484–487; the sequence is SDEL.

The protein belongs to the histidine acid phosphatase family. MINPP1 subfamily. N-glycosylated. In terms of tissue distribution, widely expressed with highest levels in kidney, liver, cerebellum and placenta.

The protein resides in the endoplasmic reticulum lumen. It is found in the secreted. The protein localises to the cell membrane. It catalyses the reaction 1D-myo-inositol hexakisphosphate + H2O = 1D-myo-inositol 1,2,4,5,6-pentakisphosphate + phosphate. The enzyme catalyses 1D-myo-inositol 1,2,4,5,6-pentakisphosphate + H2O = 1D-myo-inositol 1,2,5,6-tetrakisphosphate + phosphate. The catalysed reaction is 1D-myo-inositol 1,2,5,6-tetrakisphosphate + H2O = 1D-myo-inositol 1,2,6-trisphosphate + phosphate. It carries out the reaction 1D-myo-inositol 1,2,6-trisphosphate + H2O = 1D-myo-inositol 1,2-bisphosphate + phosphate. It catalyses the reaction 1D-myo-inositol 1,2-bisphosphate + H2O = 1D-myo-inositol 2-phosphate + phosphate. The enzyme catalyses 1D-myo-inositol hexakisphosphate + H2O = 1D-myo-inositol 1,2,3,5,6-pentakisphosphate + phosphate. The catalysed reaction is 1D-myo-inositol 1,2,3,5,6-pentakisphosphate + H2O = 1D-myo-inositol 1,2,3,6-tetrakisphosphate + phosphate. It carries out the reaction 1D-myo-inositol 1,2,3,6-tetrakisphosphate + H2O = 1D-myo-inositol 1,2,3-trisphosphate + phosphate. It catalyses the reaction 1D-myo-inositol 1,2,3-trisphosphate + H2O = 1D-myo-inositol 2,3-bisphosphate + phosphate. The enzyme catalyses 1D-myo-inositol 2,3-bisphosphate + H2O = 1D-myo-inositol 2-phosphate + phosphate. The catalysed reaction is 1D-myo-inositol 1,3,4,5,6-pentakisphosphate + H2O = 1D-myo-inositol 1,4,5,6-tetrakisphosphate + phosphate. It carries out the reaction 1D-myo-inositol 1,4,5,6-tetrakisphosphate + H2O = 1D-myo-inositol 1,4,5-trisphosphate + phosphate. It catalyses the reaction (2R)-2,3-bisphosphoglycerate + H2O = (2R)-2-phosphoglycerate + phosphate. Multiple inositol polyphosphate phosphatase that hydrolyzes 1D-myo-inositol 1,3,4,5,6-pentakisphosphate (InsP5[2OH]) and 1D-myo-inositol hexakisphosphate (InsP6) to a range of less phosphorylated inositol phosphates. This regulates the availability of these various small molecule second messengers and metal chelators which control many aspects of cell physiology. Has a weak in vitro activity towards 1D-myo-inositol 1,4,5-trisphosphate which is unlikely to be physiologically relevant. By regulating intracellular inositol polyphosphates pools, which act as metal chelators, it may control the availability of intracellular calcium and iron, which are important for proper neuronal development and homeostasis. May have a dual substrate specificity, and function as a 2,3-bisphosphoglycerate 3-phosphatase hydrolyzing 2,3-bisphosphoglycerate to 2-phosphoglycerate. 2,3-bisphosphoglycerate (BPG) is formed as part of the Rapoport-Luebering glycolytic bypass and is a regulator of systemic oxygen homeostasis as the major allosteric effector of hemoglobin. This chain is Multiple inositol polyphosphate phosphatase 1, found in Homo sapiens (Human).